The sequence spans 167 residues: Protein archease (167 aa).

Ala2 is subject to N-acetylalanine. Ca(2+) is bound by residues Asp39, Asp166, and Ile167.

The protein belongs to the archease family. As to quaternary structure, component of the tRNA-splicing ligase complex.

In terms of biological role, component of the tRNA-splicing ligase complex required to facilitate the enzymatic turnover of catalytic subunit RTCB. Together with DDX1, acts by facilitating the guanylylation of RTCB, a key intermediate step in tRNA ligation. In Homo sapiens (Human), this protein is Protein archease (ZBTB8OS).